The sequence spans 115 residues: MAGRSGDSDEELLKTVRLIKFLYQSNPPPSSEGTRQARRNRRRRWRERQRHIRSISAWILSNYLGRPAEPVPLQLPPQRLTLDCSEDCGTSGTQGVGSPQILVESPTVLESGTKE.

S5 and S8 each carry phosphoserine; by host CK2. The homomultimerization stretch occupies residues 18 to 26 (LIKFLYQSN). The segment at 23–48 (YQSNPPPSSEGTRQARRNRRRRWRER) is disordered. A Nuclear localization signal and RNA-binding (RRE) motif is present at residues 34–50 (TRQARRNRRRRWRERQR). Basic residues predominate over residues 36–48 (QARRNRRRRWRER). Positions 73–83 (LQLPPQRLTLD) match the Nuclear export signal and binding to XPO1 motif. The disordered stretch occupies residues 89-115 (GTSGTQGVGSPQILVESPTVLESGTKE). 2 positions are modified to phosphoserine; by host: S91 and S98.

Belongs to the HIV-1 REV protein family. As to quaternary structure, homomultimer; when bound to the RRE. Multimeric assembly is essential for activity and may involve XPO1. Binds to human KPNB1, XPO1, TNPO1, RANBP5 and IPO7. Interacts with the viral Integrase. Interacts with human KHDRBS1. Interacts with human NAP1; this interaction decreases Rev multimerization and stimulates its activity. Interacts with human DEAD-box helicases DDX3 and DDX24; these interactions may serve for viral RNA export to the cytoplasm and packaging, respectively. Interacts with human PSIP1; this interaction may inhibit HIV-1 DNA integration by promoting dissociation of the Integrase-LEDGF/p75 complex. In terms of processing, asymmetrically arginine dimethylated at one site by host PRMT6. Methylation impairs the RNA-binding activity and export of viral RNA from the nucleus to the cytoplasm. Phosphorylated by protein kinase CK2. Presence of, and maybe binding to the N-terminus of the regulatory beta subunit of CK2 is necessary for CK2-mediated Rev's phosphorylation.

The protein localises to the host nucleus. Its subcellular location is the host nucleolus. It is found in the host cytoplasm. Its function is as follows. Escorts unspliced or incompletely spliced viral pre-mRNAs (late transcripts) out of the nucleus of infected cells. These pre-mRNAs carry a recognition sequence called Rev responsive element (RRE) located in the env gene, that is not present in fully spliced viral mRNAs (early transcripts). This function is essential since most viral proteins are translated from unspliced or partially spliced pre-mRNAs which cannot exit the nucleus by the pathway used by fully processed cellular mRNAs. Rev itself is translated from a fully spliced mRNA that readily exits the nucleus. Rev's nuclear localization signal (NLS) binds directly to KPNB1/Importin beta-1 without previous binding to KPNA1/Importin alpha-1. KPNB1 binds to the GDP bound form of RAN (Ran-GDP) and targets Rev to the nucleus. In the nucleus, the conversion from Ran-GDP to Ran-GTP dissociates Rev from KPNB1 and allows Rev's binding to the RRE in viral pre-mRNAs. Rev multimerization on the RRE via cooperative assembly exposes its nuclear export signal (NES) to the surface. Rev can then form a complex with XPO1/CRM1 and Ran-GTP, leading to nuclear export of the complex. Conversion from Ran-GTP to Ran-GDP mediates dissociation of the Rev/RRE/XPO1/RAN complex, so that Rev can return to the nucleus for a subsequent round of export. Beside KPNB1, also seems to interact with TNPO1/Transportin-1, RANBP5/IPO5 and IPO7/RANBP7 for nuclear import. The nucleoporin-like HRB/RIP is an essential cofactor that probably indirectly interacts with Rev to release HIV RNAs from the perinuclear region to the cytoplasm. This is Protein Rev from Human immunodeficiency virus type 1 group M subtype B (isolate MN) (HIV-1).